The following is a 557-amino-acid chain: Dihydroxy-acid dehydratase (557 aa).

Asp78 serves as a coordination point for Mg(2+). Cys119 contacts [2Fe-2S] cluster. Mg(2+)-binding residues include Asp120 and Lys121. Lys121 carries the N6-carboxylysine modification. Cys191 is a [2Fe-2S] cluster binding site. Glu442 serves as a coordination point for Mg(2+). Residue Ser468 is the Proton acceptor of the active site.

The protein belongs to the IlvD/Edd family. In terms of assembly, homodimer. [2Fe-2S] cluster is required as a cofactor. Mg(2+) serves as cofactor.

It catalyses the reaction (2R)-2,3-dihydroxy-3-methylbutanoate = 3-methyl-2-oxobutanoate + H2O. The catalysed reaction is (2R,3R)-2,3-dihydroxy-3-methylpentanoate = (S)-3-methyl-2-oxopentanoate + H2O. Its pathway is amino-acid biosynthesis; L-isoleucine biosynthesis; L-isoleucine from 2-oxobutanoate: step 3/4. It participates in amino-acid biosynthesis; L-valine biosynthesis; L-valine from pyruvate: step 3/4. In terms of biological role, functions in the biosynthesis of branched-chain amino acids. Catalyzes the dehydration of (2R,3R)-2,3-dihydroxy-3-methylpentanoate (2,3-dihydroxy-3-methylvalerate) into 2-oxo-3-methylpentanoate (2-oxo-3-methylvalerate) and of (2R)-2,3-dihydroxy-3-methylbutanoate (2,3-dihydroxyisovalerate) into 2-oxo-3-methylbutanoate (2-oxoisovalerate), the penultimate precursor to L-isoleucine and L-valine, respectively. The polypeptide is Dihydroxy-acid dehydratase (Lachnoclostridium phytofermentans (strain ATCC 700394 / DSM 18823 / ISDg) (Clostridium phytofermentans)).